A 114-amino-acid chain; its full sequence is Astacin-like metalloprotease toxin 4 (114 aa).

The 114-residue stretch at 1–114 (RETNENDYVD…GLLCLFKGSV (114 aa)) folds into the Peptidase M12A domain. A disulfide bond links cysteine 17 and cysteine 38. Histidine 46 serves as a coordination point for Zn(2+). The active site involves glutamate 47. Zn(2+)-binding residues include histidine 50 and histidine 56. A glycan (N-linked (GlcNAc...) asparagine) is linked at asparagine 88.

Monomer. It depends on Zn(2+) as a cofactor. In terms of tissue distribution, expressed by the venom gland.

It is found in the secreted. Its activity is regulated as follows. Inhibited by 1,10-phenanthroline. Functionally, zinc metalloprotease. Provoques deadhesion of endothelial cells from cell cultures, and also degradation of fibronectin, fibrinogen and gelatin in vitro. Its role in the venom is not fully understood but it might act as a spreading factor that facilitates diffusion of other venom toxins. Alternatively, it might be involved in the proteolytic processing of other venom toxins or it might play a role in extra-oral digestion of prey. This is Astacin-like metalloprotease toxin 4 from Loxosceles laeta (South American recluse spider).